A 299-amino-acid polypeptide reads, in one-letter code: B-box zinc finger protein 22 (299 aa).

Residues cysteine 5, cysteine 8, cysteine 28, histidine 33, cysteine 57, cysteine 60, cysteine 80, and histidine 85 each contribute to the Zn(2+) site. Residues 5–47 form a B box-type 1; atypical zinc finger; the sequence is CNVCEAAEATVLCCADEAALCWACDEKIHAANKLAGKHQRVPL. The B box-type 2; atypical zinc finger occupies 57–99; sequence CDICQEASGFFFCLQDRALLCRKCDVAIHTVNPHVSAHQRFLL. 2 disordered regions span residues 143–181 and 206–299; these read FDHH…GSTT and ENNG…RRRF. Polar residues-rich tracts occupy residues 164–181, 251–260, and 277–290; these read VNDQ…GSTT, QIQSPPTASG, and ITSS…SPNQ.

In terms of assembly, interacts with HY5. Ubiquitinated by COP1 in vitro. COP1-mediated degradation of BBX22 by the proteasome occurs in the dark and is important for a precise skotomorphogenesis process and optimization of seedling growth under short days conditions.

It is found in the nucleus. In terms of biological role, acts as a positive regulator of seedling photomorphogenesis and light-regulated inhibition of hypocotyl elongation, independently and in concert with HY5 and BBX21. Acts as a positive regulator of de-etiolation and influences chloroplast biogenesis and function through regulation of genes encoding chloroplast proteins. Acts downstream of COP1 and plays an important role in early and long-term adjustment of the shade avoidance syndrome (SAS) responses in natural environments. Regulates the expression of genes responsive to light hormone signals which may contribute to optimal seedling development. This Arabidopsis thaliana (Mouse-ear cress) protein is B-box zinc finger protein 22.